We begin with the raw amino-acid sequence, 83 residues long: Kappa-theraphotoxin-Cg2b (83 aa).

A signal peptide spans 1 to 21 (MKGSAFAIILGLVVLCACSFA). The propeptide occupies 22–53 (EDEQDQFASPNELLRSMFLESRHELIPEVEGR). Cystine bridges form between Cys-55–Cys-69, Cys-62–Cys-74, and Cys-68–Cys-78.

The protein belongs to the neurotoxin 30 (phrixotoxin) family. Expressed by the venom gland.

Its subcellular location is the secreted. Its function is as follows. Probable ion channel inhibitor. This is Kappa-theraphotoxin-Cg2b from Chilobrachys guangxiensis (Chinese earth tiger tarantula).